A 156-amino-acid chain; its full sequence is Regulatory protein RecX (156 aa).

Belongs to the RecX family.

It localises to the cytoplasm. Its function is as follows. Modulates RecA activity. The sequence is that of Regulatory protein RecX from Pseudomonas putida (strain W619).